A 585-amino-acid polypeptide reads, in one-letter code: A-type ATP synthase subunit A (585 aa).

231-238 is an ATP binding site; it reads GPFGSGKT.

It belongs to the ATPase alpha/beta chains family. As to quaternary structure, has multiple subunits with at least A(3), B(3), C, D, E, F, H, I and proteolipid K(x).

Its subcellular location is the cell membrane. It carries out the reaction ATP + H2O + 4 H(+)(in) = ADP + phosphate + 5 H(+)(out). In terms of biological role, produces ATP from ADP in the presence of a proton gradient across the membrane. The archaeal alpha chain is a catalytic subunit. Functionally, component of the A-type ATP synthase that produces ATP from ADP in the presence of a proton gradient across the membrane. The A chain is the catalytic subunit. The chain is A-type ATP synthase subunit A from Thermococcus sp. (strain KI).